We begin with the raw amino-acid sequence, 443 residues long: Crinkler effector protein 161 (443 aa).

The N-terminal stretch at 1–17 (MVKLSCVIVGVPGDPFQ) is a signal peptide. The LQLFLAK domain stretch occupies residues 18-56 (VEIDEICELVAGLKDAIKKEKPDSIKCDADKLQLFKAAK). The interval 57-126 (EDRTFSASGA…GMESPSISQI (70 aa)) is DWL domain. Residues 127–133 (HVLVVLP) carry the HVLVXXP motif motif. The segment at 134–439 (EDSESEGGTS…RSMPGYCCAN (306 aa)) is effector domain. Short sequence motifs (nuclear localization signal) lie at residues 161–170 (ADKKRKRYWH) and 384–393 (HQPLKRLKLS).

It belongs to the Crinkler effector family.

Its subcellular location is the secreted. It localises to the host nucleus. Functionally, secreted effector that exhibits strong cell death suppression activity and suppresses cell death induced by a variety of effectors including CRN63, Avh241 and Avr3a. Protects host plants from biotic and abiotic stresses such as salinity and drought by up-regulation of many defense-related genes, including ABC transporters, Cytochrome P450 monooxygenases and receptor-like kinases (RLKs). Also enhances resistance to Phytophtora pathogens. The chain is Crinkler effector protein 161 from Phytophthora sojae (strain P6497) (Soybean stem and root rot agent).